The primary structure comprises 276 residues: NADPH-dependent 7-cyano-7-deazaguanine reductase (276 aa).

Substrate is bound at residue 83-85; it reads IES. An NADPH-binding site is contributed by 85–86; that stretch reads SK. Residue cysteine 184 is the Thioimide intermediate of the active site. Aspartate 191 (proton donor) is an active-site residue. 223 to 224 serves as a coordination point for substrate; sequence HE. 252 to 253 is a binding site for NADPH; it reads RG.

The protein belongs to the GTP cyclohydrolase I family. QueF type 2 subfamily. In terms of assembly, homodimer.

It is found in the cytoplasm. It carries out the reaction 7-aminomethyl-7-carbaguanine + 2 NADP(+) = 7-cyano-7-deazaguanine + 2 NADPH + 3 H(+). It participates in tRNA modification; tRNA-queuosine biosynthesis. Its function is as follows. Catalyzes the NADPH-dependent reduction of 7-cyano-7-deazaguanine (preQ0) to 7-aminomethyl-7-deazaguanine (preQ1). The polypeptide is NADPH-dependent 7-cyano-7-deazaguanine reductase (Ectopseudomonas mendocina (strain ymp) (Pseudomonas mendocina)).